The chain runs to 460 residues: Bifunctional protein GlmU (460 aa).

Residues 1–228 (MKNYALVLAA…NSLAMGVNDL (228 aa)) are pyrophosphorylase. Residues 8-11 (LAAG), K22, Q72, and 77-78 (GT) contribute to the UDP-N-acetyl-alpha-D-glucosamine site. D102 provides a ligand contact to Mg(2+). Residues G139, E154, N169, and N226 each contribute to the UDP-N-acetyl-alpha-D-glucosamine site. N226 provides a ligand contact to Mg(2+). The interval 229–249 (YAISKAEKYLREYINKDHMLN) is linker. Residues 250–460 (GVSMINPETI…LISPKPKKEE (211 aa)) form an N-acetyltransferase region. R331 and K349 together coordinate UDP-N-acetyl-alpha-D-glucosamine. The active-site Proton acceptor is H361. The UDP-N-acetyl-alpha-D-glucosamine site is built by Y364 and N375. Residues 384–385 (NY), A421, and R438 contribute to the acetyl-CoA site.

This sequence in the N-terminal section; belongs to the N-acetylglucosamine-1-phosphate uridyltransferase family. The protein in the C-terminal section; belongs to the transferase hexapeptide repeat family. Homotrimer. Mg(2+) is required as a cofactor.

It is found in the cytoplasm. The catalysed reaction is alpha-D-glucosamine 1-phosphate + acetyl-CoA = N-acetyl-alpha-D-glucosamine 1-phosphate + CoA + H(+). It catalyses the reaction N-acetyl-alpha-D-glucosamine 1-phosphate + UTP + H(+) = UDP-N-acetyl-alpha-D-glucosamine + diphosphate. It functions in the pathway nucleotide-sugar biosynthesis; UDP-N-acetyl-alpha-D-glucosamine biosynthesis; N-acetyl-alpha-D-glucosamine 1-phosphate from alpha-D-glucosamine 6-phosphate (route II): step 2/2. It participates in nucleotide-sugar biosynthesis; UDP-N-acetyl-alpha-D-glucosamine biosynthesis; UDP-N-acetyl-alpha-D-glucosamine from N-acetyl-alpha-D-glucosamine 1-phosphate: step 1/1. Its pathway is bacterial outer membrane biogenesis; LPS lipid A biosynthesis. Catalyzes the last two sequential reactions in the de novo biosynthetic pathway for UDP-N-acetylglucosamine (UDP-GlcNAc). The C-terminal domain catalyzes the transfer of acetyl group from acetyl coenzyme A to glucosamine-1-phosphate (GlcN-1-P) to produce N-acetylglucosamine-1-phosphate (GlcNAc-1-P), which is converted into UDP-GlcNAc by the transfer of uridine 5-monophosphate (from uridine 5-triphosphate), a reaction catalyzed by the N-terminal domain. This chain is Bifunctional protein GlmU, found in Acholeplasma laidlawii (strain PG-8A).